The primary structure comprises 291 residues: MALAARLLPLPLLSWSLPGRATRLRTLRTTEVKLTLNEFCCLCRRRLGSSAAPIPRCTWAWASPTMRSWGPRRPLLGRAEHSPALASLPASPIRSYSTEEQPQQRQRTRMIILGFSNPINWVRTRIYAFLIWAYFDKEFSIAEFSEGAKQAFAYVSKLLSQCKFDLLEELVAKEVLQVLKEKVASLSDNHKNALAADIDDIVYTSTGDISIYYDEKGRKFVNILMCFWYLTSANIPSESLSGANVFQVKLGDQSVETKQLLSASYEFQREFTQGVKPDWTIARIEHSKLLE.

A mitochondrion-targeting transit peptide spans 1–96; it reads MALAARLLPL…SLPASPIRSY (96 aa).

In terms of assembly, interacts with AFG3L2. Interacts with SPG7. Interacts with SMDT1/EMRE (via the N-terminal transit peptide); interaction is direct and takes place before maturation of SMDT1/EMRE.

Its subcellular location is the mitochondrion matrix. Promotes sorting of SMDT1/EMRE in mitochondria by ensuring its maturation. Interacts with the transit peptide region of SMDT1/EMRE precursor protein in the mitochondrial matrix, leading to protect it against protein degradation by YME1L1, thereby ensuring SMDT1/EMRE maturation by the mitochondrial processing peptidase (PMPCA and PMPCB). This Rattus norvegicus (Rat) protein is m-AAA protease-interacting protein 1, mitochondrial.